Reading from the N-terminus, the 86-residue chain is Cell division topological specificity factor (86 aa).

It belongs to the MinE family.

Prevents the cell division inhibition by proteins MinC and MinD at internal division sites while permitting inhibition at polar sites. This ensures cell division at the proper site by restricting the formation of a division septum at the midpoint of the long axis of the cell. This Shewanella sediminis (strain HAW-EB3) protein is Cell division topological specificity factor.